Consider the following 78-residue polypeptide: Acyl carrier protein AcpP (78 aa).

Positions 2–77 (SDTAERVKKI…DAVKYIDKAS (76 aa)) constitute a Carrier domain. Ser-37 carries the O-(pantetheine 4'-phosphoryl)serine modification.

This sequence belongs to the acyl carrier protein (ACP) family. Post-translationally, 4'-phosphopantetheine is transferred from CoA to a specific serine of apo-ACP by AcpS. This modification is essential for activity because fatty acids are bound in thioester linkage to the sulfhydryl of the prosthetic group.

Its subcellular location is the cytoplasm. It participates in lipid metabolism; fatty acid biosynthesis. Its function is as follows. Carrier of the growing fatty acid chain in fatty acid biosynthesis. The chain is Acyl carrier protein AcpP from Mesorhizobium japonicum (strain LMG 29417 / CECT 9101 / MAFF 303099) (Mesorhizobium loti (strain MAFF 303099)).